The following is a 272-amino-acid chain: Ribosomal RNA small subunit methyltransferase A (272 aa).

The S-adenosyl-L-methionine site is built by N15, I17, G42, E64, D90, and N109.

It belongs to the class I-like SAM-binding methyltransferase superfamily. rRNA adenine N(6)-methyltransferase family. RsmA subfamily.

It is found in the cytoplasm. It carries out the reaction adenosine(1518)/adenosine(1519) in 16S rRNA + 4 S-adenosyl-L-methionine = N(6)-dimethyladenosine(1518)/N(6)-dimethyladenosine(1519) in 16S rRNA + 4 S-adenosyl-L-homocysteine + 4 H(+). Functionally, specifically dimethylates two adjacent adenosines (A1518 and A1519) in the loop of a conserved hairpin near the 3'-end of 16S rRNA in the 30S particle. May play a critical role in biogenesis of 30S subunits. This Wolbachia sp. subsp. Drosophila simulans (strain wRi) protein is Ribosomal RNA small subunit methyltransferase A.